The chain runs to 383 residues: NifS-like protein (383 aa).

Pyridoxal 5'-phosphate is bound by residues 58-59 and 184-186; these read SE and SIN.

Belongs to the class-V pyridoxal-phosphate-dependent aminotransferase family. NifS/IscS subfamily. Pyridoxal 5'-phosphate is required as a cofactor.

The protein resides in the virion. This African swine fever virus (strain Badajoz 1971 Vero-adapted) (Ba71V) protein is NifS-like protein.